Reading from the N-terminus, the 798-residue chain is Integrin beta-7 (798 aa).

Positions 1 to 19 are cleaved as a signal peptide; sequence MVALPMVLVLLLVLSRGES. The Extracellular portion of the chain corresponds to 20–723; sequence ELDAKIPSTG…VRPQEKGADH (704 aa). The PSI domain maps to 44–92; that stretch reads SCQPAPSCQKCILSHPSCAWCKQLNFTASGEAEARRCARREELLARGCP. 7 cysteine pairs are disulfide-bonded: Cys-51/Cys-476, Cys-54/Cys-80, Cys-64/Cys-91, Cys-216/Cys-223, Cys-271/Cys-311, Cys-412/Cys-428, and Cys-448/Cys-474. Asn-68 carries N-linked (GlcNAc...) asparagine glycosylation. The interval 98–124 is disordered; the sequence is EPRGQQEVLQDQPLSQGARGEGATQLA. A VWFA domain is found at 150–389; sequence YPVDLYYLMD…QLIMDAYNSL (240 aa). Mg(2+) contacts are provided by Ser-161 and Ser-163. Ca(2+) contacts are provided by Ser-163, Asp-166, Asp-167, and Asp-198. Ca(2+)-binding residues include Asn-254, Asp-256, Pro-258, and Glu-259. Residue Glu-259 participates in Mg(2+) binding. An N-linked (GlcNAc...) asparagine glycan is attached at Asn-279. Positions 289 and 373 each coordinate Ca(2+). N-linked (GlcNAc...) asparagine glycosylation is present at Asn-434. N-linked (GlcNAc...) asparagine glycosylation occurs at Asn-477. Cystine bridges form between Cys-478–Cys-497, Cys-488–Cys-500, Cys-502–Cys-511, Cys-513–Cys-545, Cys-527–Cys-543, Cys-537–Cys-548, Cys-550–Cys-559, Cys-561–Cys-582, Cys-566–Cys-580, Cys-574–Cys-585, Cys-587–Cys-596, Cys-598–Cys-621, Cys-605–Cys-619, Cys-613–Cys-624, Cys-626–Cys-635, Cys-638–Cys-641, Cys-645–Cys-688, Cys-651–Cys-670, and Cys-654–Cys-666. 4 consecutive I-EGF domains span residues 478 to 512, 513 to 560, 561 to 597, and 598 to 636; these read CSDT…RLCE, CSVA…HLCE, CDDA…RACE, and CSGD…ALCD. N-linked (GlcNAc...) asparagine glycosylation occurs at Asn-531. Asn-590 is a glycosylation site (N-linked (GlcNAc...) asparagine). Residues Asn-665 and Asn-674 are each glycosylated (N-linked (GlcNAc...) asparagine). Residues 724–746 traverse the membrane as a helical segment; it reads TQAIVLGCVGGIVAVGLGLVLAY. The Cytoplasmic portion of the chain corresponds to 747–798; sequence RLSVEIYDRREYSRFEKEQQQLNWKQDSNPLYKSAITTTINPRFQEADSPTL. Tyr-778 carries the phosphotyrosine; by Tyr-kinases modification.

It belongs to the integrin beta chain family. In terms of assembly, heterodimer of an alpha and a beta subunit. ITGB7/beta-7 associates with either ITGA4/alpha-4 or ITGAE/alpha-E. Integrin ITGA4/ITGB7 interacts with MADCAM1. Integrin ITGA4/ITGB7 interacts with VCAM1 and fibronectin. Interacts with FLNA (via filamin repeats 4, 9, 12, 17, 19, 21, and 23). (Microbial infection) May interact with HIV-1 gp120. In terms of tissue distribution, expressed in a variety of leukocyte lines.

The protein localises to the cell membrane. Functionally, integrin ITGA4/ITGB7 (alpha-4/beta-7) (Peyer patches-specific homing receptor LPAM-1) is an adhesion molecule that mediates lymphocyte migration and homing to gut-associated lymphoid tissue (GALT). Integrin ITGA4/ITGB7 interacts with the cell surface adhesion molecules MADCAM1 which is normally expressed by the vascular endothelium of the gastrointestinal tract. Also interacts with VCAM1 and fibronectin, an extracellular matrix component. It recognizes one or more domains within the alternatively spliced CS-1 region of fibronectin. Interactions involve the tripeptide L-D-T in MADCAM1, and L-D-V in fibronectin. Integrin ITGAE/ITGB7 (alpha-E/beta-7, HML-1) is a receptor for E-cadherin. (Microbial infection) Binds to HIV-1 gp120, thereby allowing the virus to enter GALT, which is thought to be the major trigger of AIDS disease. Interaction would involve a tripeptide L-D-I in HIV-1 gp120. This is Integrin beta-7 (ITGB7) from Homo sapiens (Human).